Here is a 117-residue protein sequence, read N- to C-terminus: MLSAAHRLRDGATFREAIRRGRRAGRQTLVVHLLVGEPVASQPARVGFVVSRAVGNAVIRNQVKRRLRHLAREHVSSLPGSAVLVVRALPPAANASAAELARDLERCLLRVGAEVTG.

It belongs to the RnpA family. In terms of assembly, consists of a catalytic RNA component (M1 or rnpB) and a protein subunit.

It carries out the reaction Endonucleolytic cleavage of RNA, removing 5'-extranucleotides from tRNA precursor.. Its function is as follows. RNaseP catalyzes the removal of the 5'-leader sequence from pre-tRNA to produce the mature 5'-terminus. It can also cleave other RNA substrates such as 4.5S RNA. The protein component plays an auxiliary but essential role in vivo by binding to the 5'-leader sequence and broadening the substrate specificity of the ribozyme. This is Ribonuclease P protein component from Nocardioides sp. (strain ATCC BAA-499 / JS614).